A 106-amino-acid polypeptide reads, in one-letter code: Diptericin A (106 aa).

An N-terminal signal peptide occupies residues 1-19; the sequence is MQFTIAVALLCCAIASTLA. The propeptide at 20-23 is removed by a dipeptidylpeptidase; sequence YPMP.

Belongs to the attacin/sarcotoxin-2 family.

The protein resides in the secreted. Functionally, antimicrobial peptide required to resist Gram-negative bacterial infections, regulated by Dredd. The sequence is that of Diptericin A from Drosophila melanogaster (Fruit fly).